The primary structure comprises 396 residues: Subtilisin-like protease 5 (396 aa).

The first 20 residues, 1–20, serve as a signal peptide directing secretion; it reads MTGFLTILSLSLAALSVTNA. The propeptide occupies 21 to 116; sequence AQILSVPQGA…VEPDAIIKQH (96 aa). Residues 37-114 form the Inhibitor I9 domain; sequence YIVVMKDDTS…AFVEPDAIIK (78 aa). Residues 125–396 form the Peptidase S8 domain; sequence PWGLSRLSNR…SRLLYNGSGR (272 aa). Catalysis depends on charge relay system residues Asp-156 and His-187. Residues Asn-230 and Asn-248 are each glycosylated (N-linked (GlcNAc...) asparagine). Residue Ser-342 is the Charge relay system of the active site. The interval 376-396 is disordered; that stretch reads PTIRNPGPDTTSRLLYNGSGR. An N-linked (GlcNAc...) asparagine glycan is attached at Asn-392.

This sequence belongs to the peptidase S8 family.

It is found in the secreted. Secreted subtilisin-like serine protease with keratinolytic activity that contributes to pathogenicity. This chain is Subtilisin-like protease 5 (SUB5), found in Arthroderma gypseum (strain ATCC MYA-4604 / CBS 118893) (Microsporum gypseum).